The sequence spans 126 residues: RxLR effector protein BLR31 (126 aa).

The N-terminal stretch at 1–22 (MLLSRAISVLALLACIRCGVHA) is a signal peptide. The short motif at 44-58 (RLLRTSVDFKDSEER) is the RxLR-dEER element.

The protein belongs to the RxLR effector family.

The protein resides in the secreted. The protein localises to the host cell. Functionally, secreted effector that triggers a hypersensitive response (HR) in 3 Lactuca saligna accessions (CGN05947, CGN05310, CGN05304). This Bremia lactucae (Lettuce downy mildew) protein is RxLR effector protein BLR31.